The chain runs to 303 residues: tRNA pseudouridine synthase B (303 aa).

Catalysis depends on Asp38, which acts as the Nucleophile.

The protein belongs to the pseudouridine synthase TruB family. Type 1 subfamily.

It catalyses the reaction uridine(55) in tRNA = pseudouridine(55) in tRNA. Its function is as follows. Responsible for synthesis of pseudouridine from uracil-55 in the psi GC loop of transfer RNAs. The polypeptide is tRNA pseudouridine synthase B (Levilactobacillus brevis (strain ATCC 367 / BCRC 12310 / CIP 105137 / JCM 1170 / LMG 11437 / NCIMB 947 / NCTC 947) (Lactobacillus brevis)).